Reading from the N-terminus, the 205-residue chain is Putative 3-methyladenine DNA glycosylase (205 aa).

The protein belongs to the DNA glycosylase MPG family.

The sequence is that of Putative 3-methyladenine DNA glycosylase from Bacillus thuringiensis (strain Al Hakam).